The chain runs to 1133 residues: SH3 and PX domain-containing protein 2A (1133 aa).

Residues 4 to 128 (YCVQDATVVD…RFFEARPEDV (125 aa)) form the PX domain. The region spanning 166–225 (MILEQYVVVSNYKKQENSELSLQAGEVVDVIEKNESGWWFVSTSEEQGWVPATYLEAQNG) is the SH3 1 domain. Thr256 carries the phosphothreonine modification. The SH3 2 domain maps to 266 to 325 (SREEKYVTVQPYTSQSKDEIGFEKGVTVEVIRKNLEGWWYIRYLGKEGWAPASYLKKAKD). Phosphoserine is present on residues Ser406 and Ser421. Disordered stretches follow at residues 415-446 (QRAQISSPNLRTRPPPRRESSLGFQLPKPPEP), 505-840 (RKKP…EWEG), 899-924 (NEQPDPSGKELDTVPAKGRQNEGKSD), and 941-964 (QSKKATPPIPSKPPGGFGKTSGTP). In terms of domain architecture, SH3 3 spans 448–507 (SVEVEYYTIAEFQSCISDGISFRGGQKAEVIDKNSGGWWYVQIGEKEGWAPASYIDKRKK). Residues 546–555 (DSPRKLKYEE) show a composition bias toward basic and acidic residues. A phosphoserine mark is found at Ser547 and Ser567. Residues 567–576 (SEPELSEEPV) are compositionally biased toward acidic residues. Over residues 577–586 (EDRASGERRP) the composition is skewed to basic and acidic residues. Phosphoserine is present on Ser593. The segment covering 608 to 620 (SSEDVALEEETIY) has biased composition (acidic residues). Low complexity-rich tracts occupy residues 634-652 (SARGSSGDSDSPGSSSLSL), 658-670 (PKSGSPKSSSLLK), and 686-715 (SSASFSSSITINTTCCSSSSSSSSSLSKTS). The residue at position 644 (Ser644) is a Phosphoserine. At Thr731 the chain carries Phosphothreonine. 3 positions are modified to phosphoserine: Ser767, Ser769, and Ser819. Position 829 is a phosphothreonine (Thr829). Residues 840 to 899 (GPATSYMTCSAYQKVQDSEISFPAGVEVQVLEKQESGWWYVRFGELEGWAPSHYLVLDEN) form the SH3 4 domain. Residues 917-946 (RQNEGKSDSLEKIERRVQALNTVNQSKKAT) are a coiled coil. 4 positions are modified to phosphoserine: Ser1002, Ser1016, Ser1017, and Ser1038. The tract at residues 1029–1059 (KGRLAERAASQGSDSPLLPAQRNSIPVSPVR) is disordered. Residues 1072 to 1133 (NLKDVYVSIA…VPSNYLEKKN (62 aa)) form the SH3 5 domain.

It belongs to the SH3PXD2 family. As to quaternary structure, interacts (via N-terminus) with CYBA. Interacts with ADAM12, ADAM15 and ADAM19. Interacts with NOXO1. Interacts (via SH3 domains) with NOXA1. Interacts with FASLG. Interacts (via PX domain) with RAB40B (GTP-bound); interaction promotes invadopodia-mediated extracellular matrix degradation. Tyrosine phosphorylated by SRC. Phosphorylation plays a regulatory role in the protein localization. The intramolecular interaction of the PX domain with the third SH3 domain maintains the protein in the cytoplasm and phosphorylation disrupts this interaction, resulting in the redistribution of the protein from cytoplasm to the perimembrane region. Phosphorylated on serine upon DNA damage, probably by ATM or ATR. As to expression, found in several cancer cell lines, particularly invasive breast carcinomas and melanomas.

The protein localises to the cytoplasm. The protein resides in the cell projection. It is found in the podosome. In terms of biological role, adapter protein involved in invadopodia and podosome formation, extracellular matrix degradation and invasiveness of some cancer cells. Binds matrix metalloproteinases (ADAMs), NADPH oxidases (NOXs) and phosphoinositides. Acts as an organizer protein that allows NOX1- or NOX3-dependent reactive oxygen species (ROS) generation and ROS localization. In association with ADAM12, mediates the neurotoxic effect of amyloid-beta peptide. The chain is SH3 and PX domain-containing protein 2A from Homo sapiens (Human).